We begin with the raw amino-acid sequence, 399 residues long: Tryptophan synthase beta chain (399 aa).

The residue at position 92 (Lys-92) is an N6-(pyridoxal phosphate)lysine.

Belongs to the TrpB family. As to quaternary structure, tetramer of two alpha and two beta chains. The cofactor is pyridoxal 5'-phosphate.

It carries out the reaction (1S,2R)-1-C-(indol-3-yl)glycerol 3-phosphate + L-serine = D-glyceraldehyde 3-phosphate + L-tryptophan + H2O. It functions in the pathway amino-acid biosynthesis; L-tryptophan biosynthesis; L-tryptophan from chorismate: step 5/5. The beta subunit is responsible for the synthesis of L-tryptophan from indole and L-serine. The polypeptide is Tryptophan synthase beta chain (Acidithiobacillus ferrooxidans (strain ATCC 23270 / DSM 14882 / CIP 104768 / NCIMB 8455) (Ferrobacillus ferrooxidans (strain ATCC 23270))).